Here is a 223-residue protein sequence, read N- to C-terminus: Translation initiation factor 6 (223 aa).

It belongs to the eIF-6 family.

Functionally, binds to the 50S ribosomal subunit and prevents its association with the 30S ribosomal subunit to form the 70S initiation complex. The protein is Translation initiation factor 6 of Sulfolobus acidocaldarius (strain ATCC 33909 / DSM 639 / JCM 8929 / NBRC 15157 / NCIMB 11770).